The following is a 147-amino-acid chain: UPF0306 protein YhbP (147 aa).

It belongs to the UPF0306 family.

The polypeptide is UPF0306 protein YhbP (Shigella boydii serotype 4 (strain Sb227)).